A 794-amino-acid chain; its full sequence is Hyaluronan mediated motility receptor (794 aa).

The interval 1-87 is disordered; sequence MSFPKAPLKR…SQKNDKDVKR (87 aa). Serine 20 carries the phosphoserine modification. The segment covering 74 to 87 has biased composition (basic and acidic residues); that stretch reads SKKDSQKNDKDVKR. Asparagine 134, asparagine 279, asparagine 446, asparagine 467, asparagine 488, asparagine 509, asparagine 530, asparagine 561, and asparagine 601 each carry an N-linked (GlcNAc...) asparagine glycan. The interval 365 to 630 is required for interaction with FAM83D; sequence EEMTSEKNVF…ITDLKNQLRQ (266 aa). 5 tandem repeats follow at residues 442–462, 463–483, 484–504, 505–525, and 526–546. The interval 442 to 546 is 5 X 21 AA tandem repeats; it reads QEKYNDTAQS…RDVTAQLESY (105 aa). Hyaluronic acid-binding regions lie at residues 719-729 and 741-750; these read KQKIKHVVKLK and KLRSQLVKRK. The residue at position 784 (threonine 784) is a Phosphothreonine.

Interacts with ANKRD26. Interacts with DYNLL1. Interacts with FAM83D/CHICA. As to expression, ubiquitously expressed.

It localises to the cell surface. Its subcellular location is the cytoplasm. The protein localises to the cytoskeleton. The protein resides in the spindle. In terms of biological role, receptor for hyaluronic acid (HA). Involved in cell motility. When hyaluronan binds to HMMR, the phosphorylation of a number of proteins, including the PTK2/FAK1 occurs. May also be involved in cellular transformation and metastasis formation, and in regulating extracellular-regulated kinase (ERK) activity. May act as a regulator of adipogenesis. In Mus musculus (Mouse), this protein is Hyaluronan mediated motility receptor (Hmmr).